The primary structure comprises 100 residues: C-X-C motif chemokine 11 (100 aa).

A signal peptide spans 1-21 (MNRKVTAIALAAIIWATAAQG). Disulfide bonds link cysteine 30–cysteine 57 and cysteine 32–cysteine 74.

The protein belongs to the intercrine alpha (chemokine CxC) family. As to quaternary structure, interacts with TNFAIP6 (via Link domain).

It is found in the secreted. In terms of biological role, chemotactic for interleukin-activated T-cells but not unstimulated T-cells, neutrophils or monocytes. Induces calcium release in activated T-cells. Binds to CXCR3. May play an important role in CNS diseases which involve T-cell recruitment. May play a role in skin immune responses. This is C-X-C motif chemokine 11 (Cxcl11) from Mus musculus (Mouse).